The chain runs to 332 residues: PTS-dependent dihydroxyacetone kinase, dihydroxyacetone-binding subunit DhaK (332 aa).

The DhaK domain occupies 9 to 331 (QPQDVVSEML…LNEDVKTISW (323 aa)). Residues 55–58 (GSGH), Lys-106, and Asp-111 each bind dihydroxyacetone. The active-site Proton acceptor is His-58. His-220 acts as the Tele-hemiaminal-histidine intermediate in catalysis.

In terms of assembly, homodimer. The dihydroxyacetone kinase complex is composed of a homodimer of DhaM, a homodimer of DhaK and the subunit DhaL.

It catalyses the reaction dihydroxyacetone + phosphoenolpyruvate = dihydroxyacetone phosphate + pyruvate. It participates in polyol metabolism; glycerol degradation. Functionally, dihydroxyacetone binding subunit of the dihydroxyacetone kinase, which is responsible the phosphoenolpyruvate (PEP)-dependent phosphorylation of dihydroxyacetone via a phosphoryl group transfer from DhaL-ATP. The polypeptide is PTS-dependent dihydroxyacetone kinase, dihydroxyacetone-binding subunit DhaK (Lactococcus lactis subsp. lactis (strain IL1403) (Streptococcus lactis)).